The following is a 161-amino-acid chain: Regulator of ribonuclease activity A (161 aa).

Belongs to the RraA family. In terms of assembly, homotrimer. Binds to both RNA-binding sites in the C-terminal region of Rne and to RhlB.

The protein resides in the cytoplasm. In terms of biological role, globally modulates RNA abundance by binding to RNase E (Rne) and regulating its endonucleolytic activity. Can modulate Rne action in a substrate-dependent manner by altering the composition of the degradosome. Modulates RNA-binding and helicase activities of the degradosome. This chain is Regulator of ribonuclease activity A, found in Klebsiella pneumoniae (strain 342).